A 37-amino-acid polypeptide reads, in one-letter code: MKIRASVRQICDKCRLIRRRGRILVICYNPRHKQRQG.

The protein belongs to the bacterial ribosomal protein bL36 family.

The protein localises to the plastid. This is Large ribosomal subunit protein bL36c from Cuscuta exaltata (Tall dodder).